The sequence spans 453 residues: Kynureninase (453 aa).

Pyridoxal 5'-phosphate is bound by residues Leu-114, Thr-115, 142–145 (FPSD), Asp-232, His-235, and Tyr-257. Residue Lys-258 is modified to N6-(pyridoxal phosphate)lysine. Pyridoxal 5'-phosphate is bound at residue Trp-286.

It belongs to the kynureninase family. In terms of assembly, homodimer. Pyridoxal 5'-phosphate is required as a cofactor.

It is found in the cytoplasm. It catalyses the reaction L-kynurenine + H2O = anthranilate + L-alanine + H(+). The catalysed reaction is 3-hydroxy-L-kynurenine + H2O = 3-hydroxyanthranilate + L-alanine + H(+). Its pathway is amino-acid degradation; L-kynurenine degradation; L-alanine and anthranilate from L-kynurenine: step 1/1. The protein operates within cofactor biosynthesis; NAD(+) biosynthesis; quinolinate from L-kynurenine: step 2/3. In terms of biological role, catalyzes the cleavage of L-kynurenine (L-Kyn) and L-3-hydroxykynurenine (L-3OHKyn) into anthranilic acid (AA) and 3-hydroxyanthranilic acid (3-OHAA), respectively. The chain is Kynureninase from Cryptococcus neoformans var. neoformans serotype D (strain B-3501A) (Filobasidiella neoformans).